The sequence spans 360 residues: D-alanine--D-alanine ligase (360 aa).

The ATP-grasp domain maps to 134–343 (KILAQRVGVP…YTELITRLIQ (210 aa)). 169-224 (AEKLGHDMFVKPSNQGSSVGVNHVTNAEEYAAALEEAFKYDDKVLVEETVPGTEVE) is a binding site for ATP. Residues aspartate 297, glutamate 310, and asparagine 312 each contribute to the Mg(2+) site.

The protein belongs to the D-alanine--D-alanine ligase family. Mg(2+) is required as a cofactor. Mn(2+) serves as cofactor.

The protein localises to the cytoplasm. The enzyme catalyses 2 D-alanine + ATP = D-alanyl-D-alanine + ADP + phosphate + H(+). The protein operates within cell wall biogenesis; peptidoglycan biosynthesis. In terms of biological role, cell wall formation. The protein is D-alanine--D-alanine ligase of Lactobacillus acidophilus (strain ATCC 700396 / NCK56 / N2 / NCFM).